Reading from the N-terminus, the 388-residue chain is Trans-enoyl reductase tenC (388 aa).

Residue 51 to 54 (VDGK) participates in NADP(+) binding. Residue 142–149 (VGVASVGM) participates in substrate binding. NADP(+) contacts are provided by residues 219 to 222 (SSES), Tyr237, and 284 to 285 (LD). 304 to 308 (SFTQF) serves as a coordination point for substrate. An NADP(+)-binding site is contributed by 373–374 (IK).

Belongs to the zinc-containing alcohol dehydrogenase family. Monomer.

It participates in secondary metabolite biosynthesis. Trans-enoyl reductase; part of the gene cluster that mediates the biosynthesis of tenellin-type 2-pyridones, iron-chelating compounds involved in iron stress tolerance, competition with the natural competitor fungus Metarhizium robertsii and insect hosts infection. TenC collaborates with the hybrid PKS-NRPS synthetase tenS to catalyze the assembly of the polyketide-amino acid backbone, since tenS lacks a designated enoylreductase (ER) domain. Upon formation of the polyketide backbone on the thiotemplate of tenS, the triketide is transferred to the NRPS module and linked to tyrosine to produce the pyrrolidine-2-dione intermediates, including pretellinin A, 11-hydropretellenin A, 12-hydropretellenin A, 13-hydropretellenin A, 14-hydropretellenin A, 12-oxopretellenin A and prototellinin D. The pathway begins with the assembly of the polyketide-amino acid backbone by the hybrid PKS-NRPS tenS with the help of the enoyl reductase tenC. These enzymes catalyze the synthesis of the pyrrolidine-2-dione intermediates pretellinin A, 11-hydropretellenin A, 12-hydropretellenin A, 13-hydropretellenin A, 14-hydropretellenin A, 12-oxopretellenin A and prototellinin D. The cytochrome P450 monooxygenase tenA then catalyzes an oxidative ring expansion of pretenellin A and 14-hydropretellenin A to form the 2-pyridone core, leading to pretenellin B and pyridovericin, respectively. The cytochrome P450 monooxygenase tenB is then required for the selective N-hydroxylation of the 2-pyridone nitrogen of yield tellinin and 15-hydroxytellenin (15-HT), respectively. The UDP-glucosyltransferase GT1 and the methyltransferase MT1, located outside the tenS gene cluster, contribute to the stepwise glycosylation and methylation of 15-HT to obtain the glycoside pyridovericin-N-O-(4-O-methyl-beta-D-glucopyranoside) (PMGP). Additional related compounds such as 1-O-methyl-15-HT, (8Z)-1-O-methyl-15-HT, and O-methyltenellin A are also produced but the enzymes involved in their biosynthesis have still to be determined. This Beauveria bassiana (White muscardine disease fungus) protein is Trans-enoyl reductase tenC.